We begin with the raw amino-acid sequence, 703 residues long: Antigen peptide transporter 2 (703 aa).

Residues 1 to 6 (MALSHP) are Lumenal-facing. Residues 7–27 (RPWASLLLVDLALLGLLQSSL) traverse the membrane as a helical segment. Over 28–56 (GTLLPPGLPGLWLEGTLRLGVLWGLLKVG) the chain is Cytoplasmic. A helical membrane pass occupies residues 57–77 (GLLRLVGTFLPLLCLTNPLFF). The Lumenal segment spans residues 78–98 (SLRALVGSTMSTSVVRVASAS). A helical membrane pass occupies residues 99-119 (WGWLLADYGAVALSLAVWAVL). At 120–148 (SPAGAQEKEPGQENNRALMIRLLRLSKPD) the chain is on the cytoplasmic side. Residues 149–169 (LPFLIVAFIFLAMAVWWEMFI) traverse the membrane as a helical segment. Positions 152–435 (LIVAFIFLAM…LVYMYGDMLS (284 aa)) constitute an ABC transmembrane type-1 domain. At 170 to 187 (PHYSGRVIDILGGDFDPD) the chain is on the lumenal side. Residues 188-208 (AFASAIFFMCLFSVGSSLSAG) traverse the membrane as a helical segment. Residues 209 to 266 (CRGGSFLFAESRINLRIREQLFSSLLRQDLAFFQETKTGELNSRLSSDTSLMSQWLSL) lie on the Cytoplasmic side of the membrane. Residues 267–287 (NANILLRSLVKVVGLYYFMLQ) form a helical membrane-spanning segment. At 288–293 (VSPRLT) the chain is on the lumenal side. A helical transmembrane segment spans residues 294-314 (FLSLLDLPLTIAAEKVYNPRH). The interval 301-389 (PLTIAAEKVY…QRVMALGMQV (89 aa)) is part of the peptide-binding site. Residues 315 to 374 (QAVLKEIQDAVAKAGQVVREAVGGLQTVRSFGAEEQEVRRYKEALERCRQLWWRRDLEKS) lie on the Cytoplasmic side of the membrane. Residues 375 to 395 (LYLVIQRVMALGMQVLILNVG) form a helical membrane-spanning segment. Topologically, residues 396-408 (VQQILAGEVTRGG) are lumenal. The helical transmembrane segment at 409-429 (LLSFLLYQEEVGHHVQNLVYM) threads the bilayer. The interval 414-433 (LYQEEVGHHVQNLVYMYGDM) is part of the peptide-binding site. Topologically, residues 430–703 (YGDMLSNVGA…AHLVQQRLEA (274 aa)) are cytoplasmic. Residues 468–702 (VEFQDVSFSY…YAHLVQQRLE (235 aa)) form the ABC transporter domain. ATP is bound at residue 503-510 (GPNGSGKS).

It belongs to the ABC transporter superfamily. ABCB family. MHC peptide exporter (TC 3.A.1.209) subfamily. In terms of assembly, heterodimer of TAP1 and TAP2 (TAP1-TAP2). A component of the peptide loading complex (PLC), interacts via TAPBP with MHCI heterodimer; this interaction mediates peptide-MHCI assembly. It depends on Mg(2+) as a cofactor.

The protein localises to the endoplasmic reticulum membrane. It catalyses the reaction a peptide antigen(in) + ATP + H2O = a peptide antigen(out) + ADP + phosphate + H(+). Functionally, ABC transporter associated with antigen processing. In complex with TAP1 mediates unidirectional translocation of peptide antigens from cytosol to endoplasmic reticulum (ER) for loading onto MHC class I (MHCI) molecules. Uses the chemical energy of ATP to export peptides against the concentration gradient. During the transport cycle alternates between 'inward-facing' state with peptide binding site facing the cytosol to 'outward-facing' state with peptide binding site facing the ER lumen. Peptide antigen binding to ATP-loaded TAP1-TAP2 induces a switch to hydrolysis-competent 'outward-facing' conformation ready for peptide loading onto nascent MHCI molecules. Subsequently ATP hydrolysis resets the transporter to the 'inward facing' state for a new cycle. As a component of the peptide loading complex (PLC), acts as a molecular scaffold essential for peptide-MHCI assembly and antigen presentation. This chain is Antigen peptide transporter 2 (Tap2), found in Rattus norvegicus (Rat).